Reading from the N-terminus, the 676-residue chain is Double-stranded RNA-specific editase Adar (676 aa).

Residues 1-51 (MKFDSRVMLNSANNNSPQHPVSAPSDINMNGYNRKLPQKRGYEMPKYSDPK) form a disordered region. The span at 8–31 (MLNSANNNSPQHPVSAPSDINMNG) shows a compositional bias: polar residues. Residues 40-51 (RGYEMPKYSDPK) are compositionally biased toward basic and acidic residues. 2 consecutive DRBM domains span residues 61 to 127 (QPKN…SFIQ) and 197 to 272 (ITVD…SLCN). Residues 348 to 672 (SVSTGTKCVS…LKKPIEQDEF (325 aa)) enclose the A to I editase domain. His372 serves as a coordination point for Zn(2+). Catalysis depends on Glu374, which acts as the Proton donor. The Zn(2+) site is built by Cys430 and Cys493.

Expressed in embryonic nervous system; late stage 13 sees ventral nerve cord expression which spreads to brain by stage 16. Expression is maintained through to adulthood.

Has A-to-I RNA editing activity on extended dsRNA: edits RNA-binding protein Rnp4F. A-to-I editing of pre-mRNAs acts predominantly through nervous system targets to affect adult nervous system integrity, function and behavior. Essential for adaptation to environmental stresses, such as oxygen deprivation, and for the prevention of premature neuronal degeneration, through the editing of ion channels as targets. The sequence is that of Double-stranded RNA-specific editase Adar from Drosophila melanogaster (Fruit fly).